Reading from the N-terminus, the 159-residue chain is Phosphopantetheine adenylyltransferase (159 aa).

Substrate is bound at residue serine 9. ATP-binding positions include 9 to 10 and histidine 17; that span reads SF. Residues lysine 41, leucine 73, and lysine 87 each coordinate substrate. ATP is bound by residues 88 to 90, glutamate 98, and 123 to 129; these read GLR and YSYLSSS.

Belongs to the bacterial CoaD family. Homohexamer. It depends on Mg(2+) as a cofactor.

The protein localises to the cytoplasm. It carries out the reaction (R)-4'-phosphopantetheine + ATP + H(+) = 3'-dephospho-CoA + diphosphate. Its pathway is cofactor biosynthesis; coenzyme A biosynthesis; CoA from (R)-pantothenate: step 4/5. Functionally, reversibly transfers an adenylyl group from ATP to 4'-phosphopantetheine, yielding dephospho-CoA (dPCoA) and pyrophosphate. This is Phosphopantetheine adenylyltransferase from Clostridium botulinum (strain Eklund 17B / Type B).